The primary structure comprises 156 residues: 6,7-dimethyl-8-ribityllumazine synthase (156 aa).

Residues Phe-22, 57–59, and 81–83 each bind 5-amino-6-(D-ribitylamino)uracil; these read AVE and CVI. A (2S)-2-hydroxy-3-oxobutyl phosphate-binding site is contributed by 86-87; that stretch reads GT. The active-site Proton donor is His-89. Phe-114 provides a ligand contact to 5-amino-6-(D-ribitylamino)uracil. Arg-128 contacts (2S)-2-hydroxy-3-oxobutyl phosphate.

It belongs to the DMRL synthase family. Forms an icosahedral capsid composed of 60 subunits, arranged as a dodecamer of pentamers.

It catalyses the reaction (2S)-2-hydroxy-3-oxobutyl phosphate + 5-amino-6-(D-ribitylamino)uracil = 6,7-dimethyl-8-(1-D-ribityl)lumazine + phosphate + 2 H2O + H(+). Its pathway is cofactor biosynthesis; riboflavin biosynthesis; riboflavin from 2-hydroxy-3-oxobutyl phosphate and 5-amino-6-(D-ribitylamino)uracil: step 1/2. In terms of biological role, catalyzes the formation of 6,7-dimethyl-8-ribityllumazine by condensation of 5-amino-6-(D-ribitylamino)uracil with 3,4-dihydroxy-2-butanone 4-phosphate. This is the penultimate step in the biosynthesis of riboflavin. The chain is 6,7-dimethyl-8-ribityllumazine synthase from Tolumonas auensis (strain DSM 9187 / NBRC 110442 / TA 4).